Reading from the N-terminus, the 322-residue chain is tRNA-dihydrouridine(16) synthase (322 aa).

FMN is bound by residues 7–9 and Gln68; that span reads PME. Cys98 functions as the Proton donor in the catalytic mechanism. Residues Lys139, 200 to 202, and 224 to 225 contribute to the FMN site; these read NGE and CR.

It belongs to the Dus family. DusC subfamily. Requires FMN as cofactor.

It catalyses the reaction 5,6-dihydrouridine(16) in tRNA + NADP(+) = uridine(16) in tRNA + NADPH + H(+). The enzyme catalyses 5,6-dihydrouridine(16) in tRNA + NAD(+) = uridine(16) in tRNA + NADH + H(+). Its function is as follows. Catalyzes the synthesis of 5,6-dihydrouridine (D), a modified base found in the D-loop of most tRNAs, via the reduction of the C5-C6 double bond in target uridines. Specifically modifies U16 in tRNAs. In Vibrio parahaemolyticus serotype O3:K6 (strain RIMD 2210633), this protein is tRNA-dihydrouridine(16) synthase.